We begin with the raw amino-acid sequence, 336 residues long: F-box protein PP2-B1 (336 aa).

The segment at 1-22 (MEQIHGGDSNSGGGGGGSSRND) is disordered. Over residues 9–18 (SNSGGGGGGS) the composition is skewed to gly residues. In terms of domain architecture, F-box spans 29–75 (ASRFDALPEDCISKVISHTSPRDACVVASVSKSVKSAAQSDLVWEMF).

In terms of assembly, part of a SCF (ASK-cullin-F-box) protein ligase complex. Interacts with SKP1A/ASK1 and SPK1B/ASK2.

Its subcellular location is the nucleus. Its pathway is protein modification; protein ubiquitination. Functionally, component of SCF(ASK-cullin-F-box) E3 ubiquitin ligase complexes, which may mediate the ubiquitination and subsequent proteasomal degradation of target proteins. This Arabidopsis thaliana (Mouse-ear cress) protein is F-box protein PP2-B1 (PP2B1).